We begin with the raw amino-acid sequence, 430 residues long: Glutamate-1-semialdehyde 2,1-aminomutase 2 (430 aa).

The residue at position 269 (Lys-269) is an N6-(pyridoxal phosphate)lysine.

This sequence belongs to the class-III pyridoxal-phosphate-dependent aminotransferase family. HemL subfamily. In terms of assembly, homodimer. Pyridoxal 5'-phosphate is required as a cofactor.

The protein resides in the cytoplasm. It catalyses the reaction (S)-4-amino-5-oxopentanoate = 5-aminolevulinate. It participates in porphyrin-containing compound metabolism; protoporphyrin-IX biosynthesis; 5-aminolevulinate from L-glutamyl-tRNA(Glu): step 2/2. The sequence is that of Glutamate-1-semialdehyde 2,1-aminomutase 2 from Lysinibacillus sphaericus (strain C3-41).